A 323-amino-acid chain; its full sequence is Dihydrodiol dehydrogenase 3 (323 aa).

NADP(+) contacts are provided by residues 20–24 and Asp50; that span reads GFGTF. The active-site Proton donor is the Tyr55. His117 lines the substrate pocket. NADP(+) is bound by residues 166–167, Gln190, 216–221, and 270–280; these read SN, YGALGS, and KSYNKKRIKEN.

This sequence belongs to the aldo/keto reductase family.

It localises to the cytoplasm. The protein is Dihydrodiol dehydrogenase 3 of Bos taurus (Bovine).